Reading from the N-terminus, the 900-residue chain is Aldos-2-ulose dehydratase (900 aa).

The tract at residues 1–433 is dehydratase domain; the sequence is MYSKVFLKPH…NPSINVFLST (433 aa). Tyr35 is a binding site for ascopyrone M. Mg(2+) is bound by residues Asp101, Thr103, Asn105, Phe107, and Asp109. Ascopyrone M-binding residues include Tyr116, Met120, His155, His215, His295, and His337. His155 serves as the catalytic Proton acceptor. His215, His295, His337, Asp343, Asp345, Asp347, Glu349, and Glu351 together coordinate Zn(2+). 3 residues coordinate ascopyrone M: Tyr414, Tyr419, and Ala627. Residues 434–739 are isomerase domain; the sequence is GILAERLDEE…EFPGFETFST (306 aa). 1,5-anhydro-D-fructose-binding residues include Ala627 and His630. Zn(2+)-binding residues include His630, His632, and Glu639. The ascopyrone M site is built by Glu639 and His641. His641 contributes to the 1,5-anhydro-D-fructose binding site. Residue His709 participates in Zn(2+) binding. Trp726 serves as a coordination point for ascopyrone M. Trp726 serves as a coordination point for 1,5-anhydro-D-fructose.

In terms of assembly, homodimer. The cofactor is Zn(2+).

The enzyme catalyses 1,5-anhydro-D-fructose = microthecin + H2O. The catalysed reaction is 1,5-anhydro-D-fructose = ascopyrone M + H2O. It carries out the reaction ascopyrone M = microthecin. It catalyses the reaction 2-dehydro-D-glucose = cortalcerone + H2O. It participates in carbohydrate metabolism; 1,5-anhydro-D-fructose degradation. Functionally, a bifunctional enzyme which catalyzes the dehydration of anhydrofructose into ascopyrone M, and the isomerization of ascopyrone M into microthecin. To a lesser extent, can also act on 2-dehydro-D-glucopyranose (D-glucosone), leading to the antibiotic cortalcerone. This chain is Aldos-2-ulose dehydratase, found in Phanerodontia chrysosporium (White-rot fungus).